A 124-amino-acid polypeptide reads, in one-letter code: SPbeta prophage-derived uncharacterized protein YoqO (124 aa).

A run of 2 helical transmembrane segments spans residues 54-74 (LVVI…LLSF) and 88-108 (VIFI…ISIM).

It localises to the cell membrane. The sequence is that of SPbeta prophage-derived uncharacterized protein YoqO (yoqO) from Bacillus subtilis (strain 168).